The primary structure comprises 216 residues: Probable transaldolase (216 aa).

Catalysis depends on lysine 83, which acts as the Schiff-base intermediate with substrate.

It belongs to the transaldolase family. Type 3B subfamily.

It is found in the cytoplasm. It carries out the reaction D-sedoheptulose 7-phosphate + D-glyceraldehyde 3-phosphate = D-erythrose 4-phosphate + beta-D-fructose 6-phosphate. It participates in carbohydrate degradation; pentose phosphate pathway; D-glyceraldehyde 3-phosphate and beta-D-fructose 6-phosphate from D-ribose 5-phosphate and D-xylulose 5-phosphate (non-oxidative stage): step 2/3. Functionally, transaldolase is important for the balance of metabolites in the pentose-phosphate pathway. This is Probable transaldolase from Thermoanaerobacter sp. (strain X514).